A 287-amino-acid polypeptide reads, in one-letter code: ATP synthase gamma chain (287 aa).

The protein belongs to the ATPase gamma chain family. As to quaternary structure, F-type ATPases have 2 components, CF(1) - the catalytic core - and CF(0) - the membrane proton channel. CF(1) has five subunits: alpha(3), beta(3), gamma(1), delta(1), epsilon(1). CF(0) has three main subunits: a, b and c.

It localises to the cell inner membrane. Functionally, produces ATP from ADP in the presence of a proton gradient across the membrane. The gamma chain is believed to be important in regulating ATPase activity and the flow of protons through the CF(0) complex. The chain is ATP synthase gamma chain from Xylella fastidiosa (strain M23).